Reading from the N-terminus, the 240-residue chain is MFYSGLLTEGGRKETDRREAASLRQQRRMKQAVQFIHKDSADLLPLDGLKKLGSSKDTQPHNILQRRLMETNLSKLRSGRVPWASKTNKLNQAKSEGLKKSEEDDMILVSCQCAGRDVKAVVDTGCLHNLISLACVDRLGLKEHVKSHKHEGEKLSLPRHLKVVDQIEHLVITLGSLRLDCPAAVVDDNEKNLSLGLQTLRSLKCIINLDKHRLIMGKTDKEEIPFVETVSLNEDNTSEA.

In Pongo abelii (Sumatran orangutan), this protein is Nuclear receptor-interacting protein 3 (NRIP3).